The chain runs to 42 residues: Photosystem I reaction center subunit IX (42 aa).

A helical transmembrane segment spans residues 7 to 27 (YLSVAPVLATLWFGSLAGLLI).

It belongs to the PsaJ family.

The protein resides in the plastid. The protein localises to the chloroplast thylakoid membrane. May help in the organization of the PsaE and PsaF subunits. This Chloranthus spicatus (Chulantree) protein is Photosystem I reaction center subunit IX.